The chain runs to 295 residues: Ribosomal RNA small subunit methyltransferase A (295 aa).

Residues N31, L33, G58, E79, D104, and N129 each coordinate S-adenosyl-L-methionine.

It belongs to the class I-like SAM-binding methyltransferase superfamily. rRNA adenine N(6)-methyltransferase family. RsmA subfamily.

The protein resides in the cytoplasm. It carries out the reaction adenosine(1518)/adenosine(1519) in 16S rRNA + 4 S-adenosyl-L-methionine = N(6)-dimethyladenosine(1518)/N(6)-dimethyladenosine(1519) in 16S rRNA + 4 S-adenosyl-L-homocysteine + 4 H(+). Specifically dimethylates two adjacent adenosines (A1518 and A1519) in the loop of a conserved hairpin near the 3'-end of 16S rRNA in the 30S particle. May play a critical role in biogenesis of 30S subunits. This chain is Ribosomal RNA small subunit methyltransferase A, found in Leuconostoc citreum (strain KM20).